We begin with the raw amino-acid sequence, 403 residues long: uncharacterized protein (403 aa).

6 consecutive transmembrane segments (helical) span residues Phe31–Phe51, Leu186–Val206, Ile238–Ile258, Leu268–Cys288, Leu303–Val323, and Leu355–Leu375.

This sequence to B.subtilis YhaP.

It is found in the cell membrane. This is an uncharacterized protein from Methanocaldococcus jannaschii (strain ATCC 43067 / DSM 2661 / JAL-1 / JCM 10045 / NBRC 100440) (Methanococcus jannaschii).